A 496-amino-acid chain; its full sequence is Probable CtpA-like serine protease (496 aa).

Residues Met1 to Glu16 are compositionally biased toward basic and acidic residues. The tract at residues Met1–Asn27 is disordered. Polar residues predominate over residues Ala18–Asn27. Residues Phe39 to Ile59 form a helical membrane-spanning segment. The 83-residue stretch at Thr124–Gly206 folds into the PDZ domain. Active-site charge relay system residues include Ser329, Asp340, and Lys354.

This sequence belongs to the peptidase S41A family.

The protein localises to the cell membrane. This Staphylococcus aureus (strain bovine RF122 / ET3-1) protein is Probable CtpA-like serine protease.